The primary structure comprises 61 residues: Sec-independent protein translocase protein TatA (61 aa).

Residues 2 to 22 form a helical membrane-spanning segment; the sequence is GLSGISPLSLLLILAIIVALF.

The protein belongs to the TatA/E family. The Tat system comprises two distinct complexes: a TatABC complex, containing multiple copies of TatA, TatB and TatC subunits, and a separate TatA complex, containing only TatA subunits. Substrates initially bind to the TatABC complex, which probably triggers association of the separate TatA complex to form the active translocon.

The protein localises to the cell inner membrane. In terms of biological role, part of the twin-arginine translocation (Tat) system that transports large folded proteins containing a characteristic twin-arginine motif in their signal peptide across membranes. TatA could form the protein-conducting channel of the Tat system. The protein is Sec-independent protein translocase protein TatA of Legionella pneumophila (strain Corby).